The primary structure comprises 730 residues: Wall-associated receptor kinase-like 3 (730 aa).

A signal peptide spans 1–25; the sequence is MKTKTYNFRYIVASVLTLLMNGSSA. At 26-357 the chain is on the extracellular side; sequence ATPPNSNSSS…AKLAHVLRGV (332 aa). N-linked (GlcNAc...) asparagine glycosylation is found at asparagine 32, asparagine 38, asparagine 68, asparagine 90, asparagine 119, asparagine 132, asparagine 212, asparagine 233, and asparagine 269. Positions 283–340 are atypical EGF-like; that stretch reads CLCRYGYFSRMSYRSCYCGSGYRGNPYIRGGCIDIDECEVPNKCGEDTCVNMAGRYSC. 3 cysteine pairs are disulfide-bonded: cysteine 285–cysteine 298, cysteine 320–cysteine 331, and cysteine 326–cysteine 340. The chain crosses the membrane as a helical span at residues 358–378; the sequence is LIGLLGLLFFVIGIFGLYKFI. Residues 379 to 730 are Cytoplasmic-facing; that stretch reads RKRRRIIRSM…LMEINRIYDS (352 aa). A Protein kinase domain is found at 428–699; that stretch reads FSIDRVLGQG…REVSIKLERI (272 aa). ATP contacts are provided by residues 434–442 and lysine 456; that span reads LGQGGQGTV. Aspartate 553 serves as the catalytic Proton acceptor. Positions 703–730 are disordered; the sequence is PKDLDVHTENEEEEEEDQLMEINRIYDS. Residues 712–721 are compositionally biased toward acidic residues; it reads NEEEEEEDQL.

This sequence belongs to the protein kinase superfamily. Ser/Thr protein kinase family. As to expression, preferentially expressed in roots and flowers.

It is found in the membrane. It catalyses the reaction L-seryl-[protein] + ATP = O-phospho-L-seryl-[protein] + ADP + H(+). It carries out the reaction L-threonyl-[protein] + ATP = O-phospho-L-threonyl-[protein] + ADP + H(+). Serine/threonine-protein kinase that may function as a signaling receptor of extracellular matrix component. This Arabidopsis thaliana (Mouse-ear cress) protein is Wall-associated receptor kinase-like 3 (WAKL3).